The sequence spans 388 residues: Basigin (388 aa).

Positions 1–22 (MAAALLLALAFTFLSGQGACAA) are cleaved as a signal peptide. Topologically, residues 23-326 (AGFLKAPMSQ…ISLRVRSRLA (304 aa)) are extracellular. Positions 37 to 120 (GGSVVLHCEA…SSDPDRNHLT (84 aa)) constitute an Ig-like domain. Intrachain disulfides connect Cys-44–Cys-108, Cys-157–Cys-203, and Cys-242–Cys-304. The Ig-like C2-type domain occupies 138–219 (EPGTIVTSVQ…VGRGNINVEG (82 aa)). 3 N-linked (GlcNAc...) asparagine glycosylation sites follow: Asn-160, Asn-269, and Asn-305. In terms of domain architecture, Ig-like V-type spans 221–320 (PRIKVGKKSE…GSARETISLR (100 aa)). Residues 327–347 (ALWPFLGIVAEVLVLVTIIFI) form a helical membrane-spanning segment. The Cytoplasmic segment spans residues 348-388 (YEKRRKPDQTLDEDDPGAAPLKGSGSHLNDKDKNVRQRNAT). A disordered region spans residues 355 to 388 (DQTLDEDDPGAAPLKGSGSHLNDKDKNVRQRNAT). A Phosphothreonine modification is found at Thr-357. At Ser-371 the chain carries Phosphoserine.

As to quaternary structure, homooligomer. Interacts with NXNL1, SLC2A1 and SLC16A1/GLUT1. Interacts with XKR8; promoting its localization at the cell membrane. In terms of assembly, homooligomer. Interacts with SLC16A1; interaction mediates SLC16A1 targeting to the plasma membrane. Interacts with SLC16A3; interaction mediates SLC16A3 targeting to the plasma membrane. Interacts with VEGFA, KDR/VEGFR2, PPIA/CYPA, SLC16A12, SLC16A11, ATP1B2, MAG, L1CAM and AJAP1. Interacts with PPIL2; regulates BSG transport to the cell membrane. Interacts with SLC16A6; this interaction mediates targeting to the plasma membrane. Expressed in the skeletal muscle, liver, small intestine, kidney, testis, brain, heart and spleen. Also present in various immature cells and endothelia.

Its subcellular location is the cell membrane. The protein localises to the photoreceptor inner segment. It localises to the cell projection. The protein resides in the cilium. It is found in the photoreceptor outer segment. Its subcellular location is the endoplasmic reticulum membrane. The protein localises to the basolateral cell membrane. In terms of biological role, essential for normal retinal maturation and development. Acts as a retinal cell surface receptor for NXNL1 and plays an important role in NXNL1-mediated survival of retinal cone photoreceptors. In association with glucose transporter SLC16A1/GLUT1 and NXNL1, promotes retinal cone survival by enhancing aerobic glycolysis and accelerating the entry of glucose into photoreceptors. Its function is as follows. Signaling receptor for cyclophilins, essential for PPIA/CYPA and PPIB/CYPB-dependent signaling related to chemotaxis and adhesion of immune cells. Plays an important role in targeting the monocarboxylate transporters SLC16A1/GLUT1 and SLC16A3 to the plasma membrane. Acts as a coreceptor for vascular endothelial growth factor receptor 2 (KDR/VEGFR2) in endothelial cells enhancing its VEGFA-mediated activation and downstream signaling. Promotes angiogenesis through EPAS1/HIF2A-mediated up-regulation of VEGFA and KDR/VEGFR2 in endothelial cells. Plays an important role in spermatogenesis; mediates interactions between germ cells and Sertoli cell and is essential for the development/differentiation of germ cells to round spermatids. The protein is Basigin (Bsg) of Rattus norvegicus (Rat).